The chain runs to 533 residues: Methyl-accepting chemotaxis protein IV (533 aa).

Topologically, residues 1 to 6 are cytoplasmic; sequence MFNRIR. A helical transmembrane segment spans residues 7–33; the sequence is ISTTLFLILILCGILQIGSNGMSFWAF. Residues 34–188 are Periplasmic-facing; the sequence is RDDLQRLNQV…AQSQRNYQIS (155 aa). A helical transmembrane segment spans residues 189-209; sequence ALVFISMIIVAAIYISSALWW. The Cytoplasmic portion of the chain corresponds to 210–533; that stretch reads TRKMIVQPLA…VQLQIAPVVS (324 aa). Residues 212-264 enclose the HAMP domain; the sequence is KMIVQPLAIIGSHFDSIAAGNLARPIAVYGRNEITAIFASLKTMQQALRGTVS. The 230-residue stretch at 269-498 folds into the Methyl-accepting transducer domain; the sequence is GSQEMHIGIA…EAAVATEQLA (230 aa). 3 positions are modified to glutamate methyl ester (Gln): glutamine 293, glutamine 300, and glutamine 307. Glutamate methyl ester (Glu) is present on glutamate 489.

This sequence belongs to the methyl-accepting chemotaxis (MCP) protein family.

The protein localises to the cell inner membrane. Functionally, mediates taxis toward dipeptides via an interaction with the periplasmic dipeptide-binding protein. In terms of biological role, chemotactic-signal transducers respond to changes in the concentration of attractants and repellents in the environment, transduce a signal from the outside to the inside of the cell, and facilitate sensory adaptation through the variation of the level of methylation. Attractants increase the level of methylation while repellents decrease the level of methylation, the methyl groups are added by the methyltransferase CheR and removed by the methylesterase CheB. The chain is Methyl-accepting chemotaxis protein IV (tap) from Escherichia coli (strain K12).